Here is a 570-residue protein sequence, read N- to C-terminus: Sulfite reductase [NADPH] hemoprotein beta-component (570 aa).

Cys434, Cys440, Cys479, and Cys483 together coordinate [4Fe-4S] cluster. Siroheme is bound at residue Cys483.

This sequence belongs to the nitrite and sulfite reductase 4Fe-4S domain family. In terms of assembly, alpha(8)-beta(8). The alpha component is a flavoprotein, the beta component is a hemoprotein. Requires siroheme as cofactor. [4Fe-4S] cluster is required as a cofactor.

It catalyses the reaction hydrogen sulfide + 3 NADP(+) + 3 H2O = sulfite + 3 NADPH + 4 H(+). It functions in the pathway sulfur metabolism; hydrogen sulfide biosynthesis; hydrogen sulfide from sulfite (NADPH route): step 1/1. Functionally, component of the sulfite reductase complex that catalyzes the 6-electron reduction of sulfite to sulfide. This is one of several activities required for the biosynthesis of L-cysteine from sulfate. The polypeptide is Sulfite reductase [NADPH] hemoprotein beta-component (Zymomonas mobilis subsp. mobilis (strain ATCC 31821 / ZM4 / CP4)).